Consider the following 333-residue polypeptide: MTDTTKNDKYNLKLIDSMQKEAPYDKVWNLAWHPNGEILATCANDKYIQIWSKDTNGKWGLVQSLEGHEKTVRRVAWSPCGRFLAGASFDASTSIWEKSKDELEFTHVSSLEGHTYEVKSVAWDSTGTLLATCSRDKSIWIWQMEDDNDFECLSINSGHGQDIKCVLWHPNEELLASSSYDDTIKFWKDIDGDWECINTLTGHESSIWDLAFNKDGDKLVSCGEDKLVLFWKFDKENEKWINIFKFKNENSRPIYSIDWSSLTNTIVTGSADDSIIFYEQESDDTPDKYKIILKKKNAHDSDVNCTKWNPKFKNILASCGDDGFIKIWELQDK.

WD repeat units follow at residues 22–61 (APYDKVWNLAWHPNGEILATCANDKYIQIWSKDTNGKWGL), 67–106 (GHEKTVRRVAWSPCGRFLAGASFDASTSIWEKSKDELEFT), 113–152 (GHTYEVKSVAWDSTGTLLATCSRDKSIWIWQMEDDNDFEC), 158–197 (GHGQDIKCVLWHPNEELLASSSYDDTIKFWKDIDGDWECI), 202–241 (GHESSIWDLAFNKDGDKLVSCGEDKLVLFWKFDKENEKWI), 249–288 (ENSRPIYSIDWSSLTNTIVTGSADDSIIFYEQESDDTPDK), and 298–333 (AHDSDVNCTKWNPKFKNILASCGDDGFIKIWELQDK).

This sequence belongs to the WD repeat CIA1 family.

In terms of biological role, essential component of the cytosolic iron-sulfur (Fe/S) protein assembly machinery. Required for the maturation of extramitochondrial Fe/S proteins. This is Probable cytosolic iron-sulfur protein assembly protein CIAO1 homolog (ciao1) from Dictyostelium discoideum (Social amoeba).